Here is a 534-residue protein sequence, read N- to C-terminus: ATP synthase subunit beta 2 (534 aa).

185 to 192 serves as a coordination point for ATP; sequence GGAGVGKT. Over residues 494–505 the composition is skewed to basic and acidic residues; the sequence is AAAREADARREA. The tract at residues 494-534 is disordered; that stretch reads AAAREADARREAAAAASGAGPGTTSDPASGSAEPQGARHGR.

The protein belongs to the ATPase alpha/beta chains family. F-type ATPases have 2 components, CF(1) - the catalytic core - and CF(0) - the membrane proton channel. CF(1) has five subunits: alpha(3), beta(3), gamma(1), delta(1), epsilon(1). CF(0) has three main subunits: a(1), b(2) and c(9-12). The alpha and beta chains form an alternating ring which encloses part of the gamma chain. CF(1) is attached to CF(0) by a central stalk formed by the gamma and epsilon chains, while a peripheral stalk is formed by the delta and b chains.

The protein resides in the cell inner membrane. It catalyses the reaction ATP + H2O + 4 H(+)(in) = ADP + phosphate + 5 H(+)(out). Functionally, produces ATP from ADP in the presence of a proton gradient across the membrane. The catalytic sites are hosted primarily by the beta subunits. The polypeptide is ATP synthase subunit beta 2 (Burkholderia mallei (strain NCTC 10247)).